Consider the following 438-residue polypeptide: Phosphoribosylamine--glycine ligase (438 aa).

In terms of domain architecture, ATP-grasp spans R108–K316. I135–T194 is a binding site for ATP. Positions 274, 286, and 288 each coordinate Mg(2+). Mn(2+)-binding residues include Q274, E286, and N288.

It belongs to the GARS family. It depends on Mg(2+) as a cofactor. Requires Mn(2+) as cofactor.

The enzyme catalyses 5-phospho-beta-D-ribosylamine + glycine + ATP = N(1)-(5-phospho-beta-D-ribosyl)glycinamide + ADP + phosphate + H(+). It participates in purine metabolism; IMP biosynthesis via de novo pathway; N(1)-(5-phospho-D-ribosyl)glycinamide from 5-phospho-alpha-D-ribose 1-diphosphate: step 2/2. This Pyrococcus abyssi (strain GE5 / Orsay) protein is Phosphoribosylamine--glycine ligase.